Here is a 413-residue protein sequence, read N- to C-terminus: Serine/threonine transporter SstT (413 aa).

9 consecutive transmembrane segments (helical) span residues 14–34, 44–64, 82–102, 141–161, 178–198, 217–237, 290–310, 330–350, and 356–376; these read GSLV…ASFS, LGTL…FILV, IVLL…VVSF, ALAS…GVAL, GVTF…FGLV, LMVL…LIVF, IPLG…VLTL, LVAA…LLLI, and LFGI…IIGV.

The protein belongs to the dicarboxylate/amino acid:cation symporter (DAACS) (TC 2.A.23) family.

The protein localises to the cell inner membrane. It carries out the reaction L-serine(in) + Na(+)(in) = L-serine(out) + Na(+)(out). The catalysed reaction is L-threonine(in) + Na(+)(in) = L-threonine(out) + Na(+)(out). Functionally, involved in the import of serine and threonine into the cell, with the concomitant import of sodium (symport system). In Edwardsiella ictaluri (strain 93-146), this protein is Serine/threonine transporter SstT.